Reading from the N-terminus, the 396-residue chain is Cysteine protease ATG4A (396 aa).

The active-site Nucleophile is C77. Catalysis depends on residues D276 and H278. An LIR motif is present at residues 390–393; the sequence is FEIL.

This sequence belongs to the peptidase C54 family. Interacts with ATG9A; the interaction is direct.

The protein resides in the cytoplasm. It catalyses the reaction [protein]-C-terminal L-amino acid-glycyl-phosphatidylethanolamide + H2O = [protein]-C-terminal L-amino acid-glycine + a 1,2-diacyl-sn-glycero-3-phosphoethanolamine. Its activity is regulated as follows. Inhibited by N-ethylmaleimide. Redox-regulated during autophagy since reducing conditions activate ATG4A whereas an oxidizing environment such as the presence of H(2)O(2) inhibits its activity. Its function is as follows. Cysteine protease that plays a key role in autophagy by mediating both proteolytic activation and delipidation of ATG8 family proteins. The protease activity is required for proteolytic activation of ATG8 family proteins: cleaves the C-terminal amino acid of ATG8 proteins to reveal a C-terminal glycine. Exposure of the glycine at the C-terminus is essential for ATG8 proteins conjugation to phosphatidylethanolamine (PE) and insertion to membranes, which is necessary for autophagy. Preferred substrate is GABARAPL2 followed by MAP1LC3A and GABARAP. Protease activity is also required to counteract formation of high-molecular weight conjugates of ATG8 proteins (ATG8ylation): acts as a deubiquitinating-like enzyme that removes ATG8 conjugated to other proteins, such as ATG3. In addition to the protease activity, also mediates delipidation of ATG8 family proteins. Catalyzes delipidation of PE-conjugated forms of ATG8 proteins during macroautophagy. Compared to ATG4B, the major protein for proteolytic activation of ATG8 proteins, shows weaker ability to cleave the C-terminal amino acid of ATG8 proteins, while it displays stronger delipidation activity. Involved in phagophore growth during mitophagy independently of its protease activity and of ATG8 proteins: acts by regulating ATG9A trafficking to mitochondria and promoting phagophore-endoplasmic reticulum contacts during the lipid transfer phase of mitophagy. The polypeptide is Cysteine protease ATG4A (Mus musculus (Mouse)).